Reading from the N-terminus, the 453-residue chain is Serine incorporator 1 (453 aa).

Residue Gly-2 is the site of N-myristoyl glycine attachment. Residues 2–39 (GSVLGLCSVASWIPCLCGSAPCLLCRCCPSGNNSTVTR) lie on the Cytoplasmic side of the membrane. The chain crosses the membrane as a helical span at residues 40-60 (LIYALFLLVGVCVACVMLIPG). Over 61–88 (MEEQLNKIPGFCENEKGVVPCNILVGYK) the chain is Lumenal. The chain crosses the membrane as a helical span at residues 89 to 109 (AVYRLCFGLAMFYLLLSLLMI). At 110 to 123 (KVKSSSDPRAAVHN) the chain is on the cytoplasmic side. The helical transmembrane segment at 124–144 (GFWFFKFATAVAIIIGAFFIP) threads the bilayer. The Lumenal portion of the chain corresponds to 145–151 (EGTFTTV). Residues 152-172 (WFYVGMAGAFCFILIQLVLLI) traverse the membrane as a helical segment. The Cytoplasmic portion of the chain corresponds to 173–197 (DFAHSWNESWVEKMEEGNSRCWYAA). The chain crosses the membrane as a helical span at residues 198 to 218 (LLSATALNYLLSLVAVVLFFV). Over 219 to 231 (YYTHPASCAENKA) the chain is Lumenal. Residues 232-252 (FISVNMLLCIGASVMSILPKI) form a helical membrane-spanning segment. Over 253-259 (QESQPRS) the chain is Cytoplasmic. The chain crosses the membrane as a helical span at residues 260-280 (GLLQSSVITVYTMYLTWSAMT). Topologically, residues 281–309 (NEPETNCNPSLLSIIGFNTTRPIPKDGQS) are lumenal. A helical transmembrane segment spans residues 310–330 (VQWWHPQGIIGLVLFLLCVFY). Residues 331-387 (SSIRTSNNSQVNKLTLTSDESTLIEDGNGRSDGSLDDGDGIHRAVDNERDGVTYSYS) are Cytoplasmic-facing. At Ser-351 the chain carries Phosphoserine. Thr-352 carries the post-translational modification Phosphothreonine. Phosphoserine occurs at positions 361 and 364. The chain crosses the membrane as a helical span at residues 388-408 (FFHFMLFLASLYIMMTLTNWY). Residues 409–426 (RYEPSREMKSQWTAVWVK) lie on the Lumenal side of the membrane. A helical transmembrane segment spans residues 427–447 (ISSSWIGLVLYVWTLVAPLVL). The Cytoplasmic segment spans residues 448–453 (TNRDFD).

Belongs to the TDE1 family. As to quaternary structure, interacts with SPTLC1. In terms of tissue distribution, highly expressed in the neuronal populations such as Purkinje cells in the cerebellum, brainstem and spinal motor neurons, locus coeruleus and raphe nuclei.

It localises to the endoplasmic reticulum membrane. Enhances the incorporation of serine into phosphatidylserine and sphingolipids. The sequence is that of Serine incorporator 1 (Serinc1) from Mus musculus (Mouse).